A 256-amino-acid polypeptide reads, in one-letter code: Short chain dehydrogenase adrF (256 aa).

The NADP(+) site is built by I11, D57, R119, Y151, K155, and V184. Catalysis depends on Y151, which acts as the Proton acceptor. Catalysis depends on K155, which acts as the Lowers pKa of active site Tyr.

It belongs to the short-chain dehydrogenases/reductases (SDR) family.

It functions in the pathway secondary metabolite biosynthesis; terpenoid biosynthesis. In terms of biological role, short chain dehydrogenase; part of the gene cluster that mediates the biosynthesis of andrastins, meroterpenoid compounds that exhibit inhibitory activity against ras farnesyltransferase, suggesting that they could be promising leads for antitumor agents. The first step of the pathway is the synthesis of 3,5-dimethylorsellinic acid (DMOA) by the polyketide synthase adrD via condensation of one acetyl-CoA starter unit with 3 malonyl-CoA units and 2 methylations. DMAO is then converted to farnesyl-DMAO by the prenyltransferase adrG. The methyltransferase adrK catalyzes the methylation of the carboxyl group of farnesyl-DMAO to farnesyl-DMAO methyl ester which is further converted to epoxyfarnesyl-DMAO methyl ester by the FAD-dependent monooxygenase adrH. The terpene cyclase adrI then catalyzes the carbon skeletal rearrangement to generate the andrastin E, the first compound in the pathway having the andrastin scaffold, with the tetracyclic ring system. The post-cyclization tailoring enzymes adrF, adrE, adrJ, and adrA, are involved in the conversion of andrastin E into andrastin A. The short chain dehydrogenase adrF is responsible for the oxidation of the C-3 a hydroxyl group of andrastin E to yield the corresponding ketone, andrastin D. The ketoreductase adrE stereoselectively reduces the carbonyl moiety to reverse the stereochemistry of the C-3 position to yield andrastin F. The acetyltransferase adrJ is the acetyltransferase that attaches the acetyl group to the C-3 hydroxyl group of andrastin F to yield andrastin C. Finally, the cytochrome P450 monooxygenase adrA catalyzes two sequential oxidation reactions of the C-23 methyl group, to generate the corresponding alcohol andrastin B, and aldehyde andrastin A. This chain is Short chain dehydrogenase adrF, found in Penicillium roqueforti.